Consider the following 371-residue polypeptide: Chaperone protein DnaJ (371 aa).

The J domain maps to Cys5–Gly70. Residues Gly127 to Gln204 form a CR-type zinc finger. Residues Cys140, Cys143, Cys156, Cys159, Cys178, Cys181, Cys192, and Cys195 each coordinate Zn(2+). 4 CXXCXGXG motif repeats span residues Cys140–Gly147, Cys156–Gly163, Cys178–Gly185, and Cys192–Gly199.

It belongs to the DnaJ family. Homodimer. The cofactor is Zn(2+).

Its subcellular location is the cytoplasm. In terms of biological role, participates actively in the response to hyperosmotic and heat shock by preventing the aggregation of stress-denatured proteins and by disaggregating proteins, also in an autonomous, DnaK-independent fashion. Unfolded proteins bind initially to DnaJ; upon interaction with the DnaJ-bound protein, DnaK hydrolyzes its bound ATP, resulting in the formation of a stable complex. GrpE releases ADP from DnaK; ATP binding to DnaK triggers the release of the substrate protein, thus completing the reaction cycle. Several rounds of ATP-dependent interactions between DnaJ, DnaK and GrpE are required for fully efficient folding. Also involved, together with DnaK and GrpE, in the DNA replication of plasmids through activation of initiation proteins. The chain is Chaperone protein DnaJ from Francisella tularensis subsp. tularensis (strain WY96-3418).